Reading from the N-terminus, the 233-residue chain is 2-phytyl-1,4-naphtoquinone methyltransferase (233 aa).

The protein belongs to the class I-like SAM-binding methyltransferase superfamily. MenG/UbiE family.

It carries out the reaction demethylphylloquinol + S-adenosyl-L-methionine = phylloquinol + S-adenosyl-L-homocysteine + H(+). The protein operates within cofactor biosynthesis; phylloquinone biosynthesis. Its function is as follows. Methyltransferase required for the conversion of 2-phytyl-1,4-beta-naphthoquinol to phylloquinol. The chain is 2-phytyl-1,4-naphtoquinone methyltransferase from Synechococcus elongatus (strain ATCC 33912 / PCC 7942 / FACHB-805) (Anacystis nidulans R2).